The following is a 212-amino-acid chain: Adenylate kinase (212 aa).

Residue 10–15 coordinates ATP; it reads GAGKGT. The NMP stretch occupies residues 30–59; the sequence is STGDMFRAAMANQTEMGRLAKSYIDKGELV. AMP-binding positions include Thr-31, Arg-36, 57–59, 86–89, and Gln-93; these read ELV and GYPR. Positions 127–159 are LID; it reads GRIINRKTGETFHKVFNPPVDYKEEDYYQREDD. ATP is bound by residues Arg-128 and 137 to 138; that span reads TF. Residues Arg-156 and Arg-167 each coordinate AMP. Residue Gln-195 coordinates ATP.

Belongs to the adenylate kinase family. As to quaternary structure, monomer.

The protein resides in the cytoplasm. It catalyses the reaction AMP + ATP = 2 ADP. It functions in the pathway purine metabolism; AMP biosynthesis via salvage pathway; AMP from ADP: step 1/1. Its function is as follows. Catalyzes the reversible transfer of the terminal phosphate group between ATP and AMP. Plays an important role in cellular energy homeostasis and in adenine nucleotide metabolism. In Streptococcus pyogenes serotype M1, this protein is Adenylate kinase.